The primary structure comprises 361 residues: MEEREWGARSARAGSPASPPSPRLDVSSYSFDPLLALYAPRLPPIPYPNAPCFNNVAEYESFLKGGRTGRGRARGTGEPASAGTSTGTSTGAGSSSRARRRAAPTPDPERIQRLRRLMVVKEDTDGTAGARRQGPGRSKKAPRNVLTRMPLHEGSPLGELHRCIREGVKVNVHIRTFKGLRGVCTGFLVAFDKFWNMALTDVDETYRKPVLGKAYERDSSLTLTRLFDRLKLQDSSKKEADSKSAVEDSTLSRYSQTSTWKVASVWGRGDTDRSSHRRSRSVPSSLQASAREESRSELSGRTTRTEGSSVGGTFSRATTLSRGQSRKKKRKPKVDYQQVFTRHINQIFIRGENVLLVHLAQ.

Residues 1–26 (MEEREWGARSARAGSPASPPSPRLDV) form a disordered region. 2 positions are modified to phosphoserine: Ser-15 and Ser-21. Omega-N-methylarginine is present on Arg-41. The disordered stretch occupies residues 67–142 (RTGRGRARGT…QGPGRSKKAP (76 aa)). Low complexity predominate over residues 76–96 (TGEPASAGTSTGTSTGAGSSS). Lys-121 participates in a covalent cross-link: Glycyl lysine isopeptide (Lys-Gly) (interchain with G-Cter in SUMO2). Ser-155 carries the post-translational modification Phosphoserine. Positions 155-230 (SPLGELHRCI…LTLTRLFDRL (76 aa)) constitute a Sm domain. The interval 172 to 205 (VHIRTFKGLRGVCTGFLVAFDKFWNMALTDVDET) is SM 1. Positions 268 to 335 (RGDTDRSSHR…RKKKRKPKVD (68 aa)) are disordered. Position 281 is a phosphoserine (Ser-281). The span at 307-323 (GSSVGGTFSRATTLSRG) shows a compositional bias: polar residues. The tract at residues 344–357 (INQIFIRGENVLLV) is SM 2.

This sequence belongs to the snRNP Sm proteins family. Component of the heptameric ring U7 snRNP complex, or U7 Sm protein core complex, at least composed of LSM10, LSM11, SNRPB, SNRPD3, SNRPE, SNRPF, SNRPG and U7 snRNA. Formation of the U7 snRNP is an ATP-dependent process mediated by a specialized SMN complex containing at least the Sm protein core complex and additionally, the U7-specific LSM10 and LSM11 proteins. Identified in a histone pre-mRNA complex, at least composed of ERI1, LSM11, SLBP, SNRPB, SYNCRIP and YBX1. Interacts (via the Sm domains) with CLNS1A. Interacts with PRMT5, SMN, ZNF473 and WDR77. Not methylated.

It localises to the nucleus. In terms of biological role, component of the U7 snRNP complex that is involved in the histone 3'-end pre-mRNA processing. Increases U7 snRNA levels but not histone 3'-end pre-mRNA processing activity, when overexpressed. Required for cell cycle progression from G1 to S phases. Binds specifically to the Sm-binding site of U7 snRNA. The protein is U7 snRNA-associated Sm-like protein LSm11 of Mus musculus (Mouse).